Here is a 557-residue protein sequence, read N- to C-terminus: Formate--tetrahydrofolate ligase (557 aa).

66–73 is a binding site for ATP; the sequence is TPAGEGKS.

The protein belongs to the formate--tetrahydrofolate ligase family.

It catalyses the reaction (6S)-5,6,7,8-tetrahydrofolate + formate + ATP = (6R)-10-formyltetrahydrofolate + ADP + phosphate. It participates in one-carbon metabolism; tetrahydrofolate interconversion. The sequence is that of Formate--tetrahydrofolate ligase from Lactobacillus johnsonii (strain CNCM I-12250 / La1 / NCC 533).